We begin with the raw amino-acid sequence, 119 residues long: Beta-2-microglobulin (119 aa).

The signal sequence occupies residues 1–20 (MARSVVVALLVLLSLSGLEA). The Ig-like C1-type domain maps to 25–114 (PKIQVYSRHP…VTFSTPKTVK (90 aa)). A disulfide bridge connects residues cysteine 45 and cysteine 100.

This sequence belongs to the beta-2-microglobulin family. As to quaternary structure, heterodimer of an alpha chain and a beta chain. Beta-2-microglobulin is the beta-chain of major histocompatibility complex class I molecules.

The protein resides in the secreted. In terms of biological role, component of the class I major histocompatibility complex (MHC). Involved in the presentation of peptide antigens to the immune system. The protein is Beta-2-microglobulin (B2M) of Ateles paniscus (Black spider monkey).